Reading from the N-terminus, the 266-residue chain is Tryptophan synthase alpha chain (266 aa).

Active-site proton acceptor residues include Glu50 and Asp61.

It belongs to the TrpA family. Tetramer of two alpha and two beta chains.

It carries out the reaction (1S,2R)-1-C-(indol-3-yl)glycerol 3-phosphate + L-serine = D-glyceraldehyde 3-phosphate + L-tryptophan + H2O. It participates in amino-acid biosynthesis; L-tryptophan biosynthesis; L-tryptophan from chorismate: step 5/5. Functionally, the alpha subunit is responsible for the aldol cleavage of indoleglycerol phosphate to indole and glyceraldehyde 3-phosphate. This Alkaliphilus metalliredigens (strain QYMF) protein is Tryptophan synthase alpha chain.